A 317-amino-acid chain; its full sequence is Carbonic anhydrase 6 (317 aa).

The first 17 residues, 1-17 (MRALVSVVSLFFLGIQA), serve as a signal peptide directing secretion. Positions 19 to 277 (SDWSYSGDDG…NNHRVVEANF (259 aa)) constitute an Alpha-carbonic anhydrase domain. C41 and C223 form a disulfide bridge. Catalysis depends on H84, which acts as the Proton donor/acceptor. Residues H110, H112, and H137 each contribute to the Zn(2+) site. 219 to 220 (TT) lines the substrate pocket. N255 carries an N-linked (GlcNAc...) asparagine glycan.

This sequence belongs to the alpha-carbonic anhydrase family. It depends on Zn(2+) as a cofactor. In terms of tissue distribution, major constituent of saliva.

It localises to the secreted. The catalysed reaction is hydrogencarbonate + H(+) = CO2 + H2O. Functionally, reversible hydration of carbon dioxide. Its role in saliva is unknown. In Mus musculus (Mouse), this protein is Carbonic anhydrase 6 (Ca6).